A 249-amino-acid polypeptide reads, in one-letter code: ATP synthase subunit a (249 aa).

Helical transmembrane passes span Gly33–Ala53, Val92–Ile112, Ile131–Ser151, Leu196–Leu216, and Gly217–Gly237.

This sequence belongs to the ATPase A chain family. F-type ATPases have 2 components, CF(1) - the catalytic core - and CF(0) - the membrane proton channel. CF(1) has five subunits: alpha(3), beta(3), gamma(1), delta(1), epsilon(1). CF(0) has four main subunits: a, b, b' and c.

The protein resides in the cellular thylakoid membrane. Functionally, key component of the proton channel; it plays a direct role in the translocation of protons across the membrane. In Synechococcus elongatus (strain ATCC 33912 / PCC 7942 / FACHB-805) (Anacystis nidulans R2), this protein is ATP synthase subunit a.